Reading from the N-terminus, the 133-residue chain is MFRRIVPVLGLALGLGLASQAAMAQEQSPPPPPAVQGTPGKDFTGVSPANLAGIMNYCVEQQYVSYDEGNPVLYGLSEKYKATEQTVGNFDYALGTAGYFDSNGKRFYLVAYTNEDDRRAACHAAVKAAQPML.

A signal peptide spans 1–24; it reads MFRRIVPVLGLALGLGLASQAAMA. The segment at 23 to 43 is disordered; it reads MAQEQSPPPPPAVQGTPGKDF. Gln-25 carries the post-translational modification Pyrrolidone carboxylic acid.

In terms of assembly, the alcohol dehydrogenase multicomponent enzyme system is composed of a dehydrogenase subunit I (AdhA), a cytochrome c subunit II (AdhB) and a subunit III (AdhS).

The protein resides in the cell membrane. Its function is as follows. Part of the alcohol dehydrogenase multicomponent enzyme system which is involved in the production of acetic acid and in the ethanol oxidase respiratory chain. Does not play an obligatory role for the alcohol dehydrogenase (ADH) activity. The chain is Alcohol dehydrogenase, 15 kDa subunit from Gluconobacter oxydans (strain 621H) (Gluconobacter suboxydans).